A 278-amino-acid chain; its full sequence is 3-oxoacyl-[acyl-carrier-protein] reductase (278 aa).

12 residues coordinate NADP(+): Thr13, Arg14, Ile16, Ser36, Ser40, Thr44, Asp66, Phe67, Glu77, Gly122, Gln125, and Glu126. Ser182 (proton donor) is an active-site residue. Positions 198, 202, 230, and 231 each coordinate NADP(+). Tyr198 serves as the catalytic Proton acceptor. Lys202 acts as the Lowers pKa of active site Tyr in catalysis.

Belongs to the short-chain dehydrogenases/reductases (SDR) family.

The protein resides in the mitochondrion. The enzyme catalyses a (3R)-hydroxyacyl-[ACP] + NADP(+) = a 3-oxoacyl-[ACP] + NADPH + H(+). The protein operates within lipid metabolism; fatty acid biosynthesis. Involved in biosynthesis of fatty acids in mitochondria. The protein is 3-oxoacyl-[acyl-carrier-protein] reductase (OAR1) of Saccharomyces cerevisiae (strain ATCC 204508 / S288c) (Baker's yeast).